The following is a 308-amino-acid chain: UDP-N-acetylenolpyruvoylglucosamine reductase (308 aa).

The region spanning 35-200 (RVGGPAQVLF…TSARFRGEPM (166 aa)) is the FAD-binding PCMH-type domain. Arg-180 is a catalytic residue. The span at 211–226 (EVQRHRETAQPVREKT) shows a compositional bias: basic and acidic residues. Positions 211-236 (EVQRHRETAQPVREKTGGSTFKNPPG) are disordered. Catalysis depends on Ser-229, which acts as the Proton donor. Glu-299 is an active-site residue.

Belongs to the MurB family. The cofactor is FAD.

It localises to the cytoplasm. The catalysed reaction is UDP-N-acetyl-alpha-D-muramate + NADP(+) = UDP-N-acetyl-3-O-(1-carboxyvinyl)-alpha-D-glucosamine + NADPH + H(+). It functions in the pathway cell wall biogenesis; peptidoglycan biosynthesis. Its function is as follows. Cell wall formation. The polypeptide is UDP-N-acetylenolpyruvoylglucosamine reductase (Rhodopseudomonas palustris (strain BisB18)).